The following is a 1406-amino-acid chain: Inactive tyrosine-protein kinase PRAG1 (1406 aa).

S148 bears the Phosphoserine mark. Basic and acidic residues predominate over residues 184 to 193 (EEKAVHKEKP). Disordered stretches follow at residues 184–205 (EEKAVHKEKPSFPYQDRPSTQE) and 217–248 (TTSGCHQGPGPLRESLPSEDDSDQRCSPSGDS). A phosphotyrosine mark is found at Y253, Y365, and Y413. 2 disordered regions span residues 372-470 (PAPE…TPQV) and 484-854 (DHRT…HSET). Residues 526–542 (RESHAHSASESKPKERP) are compositionally biased toward basic and acidic residues. Over residues 546 to 576 (PKLSKSSPVGSPVSPSAGGPPVSPLADLSDG) the composition is skewed to low complexity. Composition is skewed to polar residues over residues 660–671 (NGPTDHSNSTTW) and 678–695 (DGSSGQNSKVGTGMSKSA). A phosphoserine mark is found at S696 and S745. 2 stretches are compositionally biased toward polar residues: residues 737-746 (SQGSAESLSP) and 754-770 (SFTTGSTDSLASDSRTC). S782 carries the phosphoserine modification. The segment covering 798-808 (SGSTEDVSPSG) has biased composition (polar residues). S826 is subject to Phosphoserine. The required for homodimerization stretch occupies residues 933 to 976 (STQLQLHGLLSNISSKEGTYAKLGGLYTQSLARLVAKCEDLFMG). Residues 978 to 1329 (QKKELHFNEN…EAKRVLQCLL (352 aa)) enclose the Protein kinase domain. Pro residues predominate over residues 1163 to 1173 (GPAPAPAPAPA). The segment at 1163-1206 (GPAPAPAPAPAPAAAAPPCSSAAPPAGGTLSPAAGPASPEGPRE) is disordered. The segment covering 1174-1202 (PAAAAPPCSSAAPPAGGTLSPAAGPASPE) has biased composition (low complexity). The tract at residues 1331–1406 (GPRRELVQQP…LQSLKLLQLL (76 aa)) is required for homodimerization.

The protein belongs to the protein kinase superfamily. In terms of assembly, homodimer. Dimerization leads to the catalytic activation of CSK. Interacts (via C-terminus) with RND2. Interacts with CSK (via SH2 domain) in a Tyr-413 phosphorylation-dependent manner; this interaction potentiates kinase activity of CSK. Interacts with PEAK1. Interacts with NOTCH1 intracellular domain (N1ICD). Forms a complex with N1ICD and MAML1, in a MAML1-dependent manner. Post-translationally, phosphorylated by CSK on Tyr-253, Tyr-365, and Tyr-413; Tyr-413 is a primary site of phosphorylation.

The protein resides in the cytoplasm. It localises to the cell junction. Its subcellular location is the focal adhesion. The protein localises to the nucleus. Its function is as follows. Catalytically inactive protein kinase that acts as a scaffold protein. Functions as an effector of the small GTPase RND2, which stimulates RhoA activity and inhibits NGF-induced neurite outgrowth. Promotes Src family kinase (SFK) signaling by regulating the subcellular localization of CSK, a negative regulator of these kinases, leading to the regulation of cell morphology and motility by a CSK-dependent mechanism. Acts as a critical coactivator of Notch signaling. The polypeptide is Inactive tyrosine-protein kinase PRAG1 (Homo sapiens (Human)).